We begin with the raw amino-acid sequence, 282 residues long: MREITPRKIIEMKGKEKIAMITAYDYPSALLADKAGFDIVFVGDSLGMVVYGEPNTLNVSMEQMVFHTRAVARAVKRALVLADMPFGSYEVSVEEGIKNAIKLIQAGADAVKIEGGYDHKKLVKRLVRMGIPVMGHTGLTPQRYLRLGGYRIMGSTEEEVEEIIRDAKALEKAGAFAVVLEFVLADVAKLVTEEVSIPTIGIGSGPYVDGQVLVWHDVLGLYEESPPFVKRYANLRDEILGAISEFKKDVKEGKFPGREHYWEFQDKEEFKRIKESVLRKVD.

Mg(2+) is bound by residues aspartate 44 and aspartate 83. 3-methyl-2-oxobutanoate-binding positions include 44–45 (DS), aspartate 83, and lysine 112. Glutamate 114 serves as a coordination point for Mg(2+). Glutamate 181 serves as the catalytic Proton acceptor.

The protein belongs to the PanB family. In terms of assembly, homodecamer; pentamer of dimers. Mg(2+) serves as cofactor.

It is found in the cytoplasm. The enzyme catalyses 3-methyl-2-oxobutanoate + (6R)-5,10-methylene-5,6,7,8-tetrahydrofolate + H2O = 2-dehydropantoate + (6S)-5,6,7,8-tetrahydrofolate. It participates in cofactor biosynthesis; coenzyme A biosynthesis. Catalyzes the reversible reaction in which hydroxymethyl group from 5,10-methylenetetrahydrofolate is transferred onto alpha-ketoisovalerate to form ketopantoate. The sequence is that of 3-methyl-2-oxobutanoate hydroxymethyltransferase from Pyrococcus abyssi (strain GE5 / Orsay).